The primary structure comprises 499 residues: Lysine--tRNA ligase (499 aa).

Positions 408 and 415 each coordinate Mg(2+).

Belongs to the class-II aminoacyl-tRNA synthetase family. As to quaternary structure, homodimer. Mg(2+) serves as cofactor.

Its subcellular location is the cytoplasm. It carries out the reaction tRNA(Lys) + L-lysine + ATP = L-lysyl-tRNA(Lys) + AMP + diphosphate. The chain is Lysine--tRNA ligase from Bacillus cereus (strain AH820).